The following is a 131-amino-acid chain: Aspartate 1-decarboxylase (131 aa).

Serine 25 functions as the Schiff-base intermediate with substrate; via pyruvic acid in the catalytic mechanism. Serine 25 bears the Pyruvic acid (Ser) mark. A substrate-binding site is contributed by threonine 57. Residue tyrosine 58 is the Proton donor of the active site. Residue 73–75 (GAA) coordinates substrate.

This sequence belongs to the PanD family. As to quaternary structure, heterooctamer of four alpha and four beta subunits. Requires pyruvate as cofactor. Post-translationally, is synthesized initially as an inactive proenzyme, which is activated by self-cleavage at a specific serine bond to produce a beta-subunit with a hydroxyl group at its C-terminus and an alpha-subunit with a pyruvoyl group at its N-terminus.

It localises to the cytoplasm. It catalyses the reaction L-aspartate + H(+) = beta-alanine + CO2. It participates in cofactor biosynthesis; (R)-pantothenate biosynthesis; beta-alanine from L-aspartate: step 1/1. Its function is as follows. Catalyzes the pyruvoyl-dependent decarboxylation of aspartate to produce beta-alanine. This is Aspartate 1-decarboxylase from Anaeromyxobacter dehalogenans (strain 2CP-C).